The sequence spans 224 residues: tRNA (guanine-N(7)-)-methyltransferase (224 aa).

Glutamate 52, aspartate 77, and aspartate 126 together coordinate S-adenosyl-L-methionine. Residue aspartate 126 is part of the active site. 2 residues coordinate substrate: lysine 130 and aspartate 162.

It belongs to the class I-like SAM-binding methyltransferase superfamily. TrmB family.

The enzyme catalyses guanosine(46) in tRNA + S-adenosyl-L-methionine = N(7)-methylguanosine(46) in tRNA + S-adenosyl-L-homocysteine. Its pathway is tRNA modification; N(7)-methylguanine-tRNA biosynthesis. In terms of biological role, catalyzes the formation of N(7)-methylguanine at position 46 (m7G46) in tRNA. The protein is tRNA (guanine-N(7)-)-methyltransferase of Christiangramia forsetii (strain DSM 17595 / CGMCC 1.15422 / KT0803) (Gramella forsetii).